We begin with the raw amino-acid sequence, 107 residues long: MIQVLLVIICLAVFPFQGSSKTLKSGNVNDYEVVNPGTVTGLPKGAVEEKHEPMKGNTLQKFPLCTTGPCCRQCKLKPAGTTCWKTSRTSHYCTGKSCDCPSYPGNG.

The signal sequence occupies residues M1–S20. Residues K21 to L64 constitute a propeptide that is removed on maturation. Intrachain disulfides connect C65/C74, C70/C93, C71/C98, and C83/C100. A Disintegrin domain is found at C65 to G105. The Cell attachment site; atypical (KTS) motif lies at K85–S87. A propeptide spanning residues N106–G107 is cleaved from the precursor.

Monomer. As to expression, expressed by the venom gland.

It localises to the secreted. In terms of biological role, specifically interacts with the alpha-1/beta-1 integrin (ITGA1/ITGB1). Exhibits highly inhibitory effects on cell adhesion and cell migration to collagens I and IV. Also shows in vivo anti-angiogenic activity. The chain is Disintegrin lebestatin from Macrovipera lebetinus (Levantine viper).